We begin with the raw amino-acid sequence, 445 residues long: Argininosuccinate synthase (445 aa).

Residues 17–25 (AFSGGLDTS) and Ala43 contribute to the ATP site. Residue Tyr99 coordinates L-citrulline. 2 residues coordinate ATP: Gly129 and Thr131. 3 residues coordinate L-aspartate: Thr131, Asn135, and Asp136. Asn135 contacts L-citrulline. Asp136 is an ATP binding site. 2 residues coordinate L-citrulline: Arg139 and Ser192. Asp194 contacts ATP. L-citrulline is bound by residues Thr201, Glu203, and Glu280.

Belongs to the argininosuccinate synthase family. Type 2 subfamily. Homotetramer.

The protein resides in the cytoplasm. The enzyme catalyses L-citrulline + L-aspartate + ATP = 2-(N(omega)-L-arginino)succinate + AMP + diphosphate + H(+). It participates in amino-acid biosynthesis; L-arginine biosynthesis; L-arginine from L-ornithine and carbamoyl phosphate: step 2/3. The polypeptide is Argininosuccinate synthase (Bordetella petrii (strain ATCC BAA-461 / DSM 12804 / CCUG 43448)).